The chain runs to 800 residues: Phosphoinositide 3-kinase adapter protein 1 (800 aa).

In terms of domain architecture, TIR spans 8–145; that stretch reads GGYDVLILYA…AVKKAISEDS (138 aa). Residues 10–144 are necessary and sufficient to mediate inhibition of NF-kappa-B downstream of activated TLRs; the sequence is YDVLILYASD…EAVKKAISED (135 aa). The 137-residue stretch at 185–321 folds into the DBB domain; it reads VQPDHIRCGV…NIPASGLHLF (137 aa). Y266 is modified (phosphotyrosine). A phosphotyrosine; by SYK mark is found at Y423, Y448, and Y463. The segment at 527 to 548 is disordered; the sequence is EMASRPPVPVPRPESSSPQPDN. Residues 643–663 adopt a coiled-coil conformation; the sequence is QQENLKRLRDSITRRQMEKQK. Basic and acidic residues predominate over residues 702-713; it reads PKKELKRGDWKT. Residues 702–800 form a disordered region; the sequence is PKKELKRGDW…YPPPVPPRGR (99 aa). Residues 714-737 show a composition bias toward low complexity; the sequence is ESTSSTTSSASNRSSTRSILSVSS. The segment covering 749–759 has biased composition (polar residues); sequence SEASRSRSPIP. Composition is skewed to pro residues over residues 767–777 and 791–800; these read LPLPERPPRVP and YPPPVPPRGR.

Homooligomer. Interacts (phosphorylated on tyrosine residues within YXXM motifs) with PIK3R1 (via SH2 domain); required for BCR- and TLR-mediated activation of phosphoinositide 3-kinase. Constitutively phosphorylated. Phosphorylated on tyrosine residues within the YXXM motifs by BTK and SYK. Isoform 1 and isoform 2 are phosphorylated on tyrosine residues, most likely within the YXXM motifs, via CD19 activation.

Its subcellular location is the cytoplasm. The protein localises to the cell membrane. In terms of biological role, signaling adapter that contributes to B-cell development by linking B-cell receptor (BCR) signaling to the phosphoinositide 3-kinase (PI3K)-Akt signaling pathway. Has a complementary role to the BCR coreceptor CD19, coupling BCR and PI3K activation by providing a docking site for the PI3K subunit PIK3R1. Alternatively, links Toll-like receptor (TLR) signaling to PI3K activation, a process preventing excessive inflammatory cytokine production. Also involved in the activation of PI3K in natural killer cells. May be involved in the survival of mature B-cells via activation of REL. This chain is Phosphoinositide 3-kinase adapter protein 1 (PIK3AP1), found in Gallus gallus (Chicken).